Reading from the N-terminus, the 426-residue chain is Serine hydroxymethyltransferase (426 aa).

(6S)-5,6,7,8-tetrahydrofolate contacts are provided by residues Leu115 and 119–121; that span reads GHI. Lys225 bears the N6-(pyridoxal phosphate)lysine mark.

The protein belongs to the SHMT family. Homodimer. Requires pyridoxal 5'-phosphate as cofactor.

The protein resides in the cytoplasm. Its pathway is amino-acid biosynthesis; glycine biosynthesis; glycine from L-serine: step 1/1. In terms of biological role, catalyzes the reversible interconversion of serine and glycine with a modified folate serving as the one-carbon carrier. Also exhibits a pteridine-independent aldolase activity toward beta-hydroxyamino acids, producing glycine and aldehydes, via a retro-aldol mechanism. This is Serine hydroxymethyltransferase from Thermoplasma acidophilum (strain ATCC 25905 / DSM 1728 / JCM 9062 / NBRC 15155 / AMRC-C165).